The primary structure comprises 247 residues: 3-oxoacyl-[acyl-carrier-protein] reductase (247 aa).

Val11–Val35 lines the NADP(+) pocket. Residue Ser143 participates in substrate binding. The Proton acceptor role is filled by Tyr156.

The protein belongs to the short-chain dehydrogenases/reductases (SDR) family.

The catalysed reaction is a (3R)-hydroxyacyl-[ACP] + NADP(+) = a 3-oxoacyl-[ACP] + NADPH + H(+). It participates in lipid metabolism; fatty acid biosynthesis. Catalyzes the NADPH-dependent reduction of beta-ketoacyl-ACP substrates to beta-hydroxyacyl-ACP products, the first reductive step in the elongation cycle of fatty acid biosynthesis. Is capable of reducing acetoacetyl-CoA, but less well than its paralog PhaB. The polypeptide is 3-oxoacyl-[acyl-carrier-protein] reductase (fabG) (Synechocystis sp. (strain ATCC 27184 / PCC 6803 / Kazusa)).